The sequence spans 62 residues: Large ribosomal subunit protein bL28 (62 aa).

The protein belongs to the bacterial ribosomal protein bL28 family.

This chain is Large ribosomal subunit protein bL28, found in Streptococcus agalactiae serotype Ia (strain ATCC 27591 / A909 / CDC SS700).